A 1024-amino-acid chain; its full sequence is Error-prone DNA polymerase (1024 aa).

It belongs to the DNA polymerase type-C family. DnaE2 subfamily.

The protein resides in the cytoplasm. The catalysed reaction is DNA(n) + a 2'-deoxyribonucleoside 5'-triphosphate = DNA(n+1) + diphosphate. Functionally, DNA polymerase involved in damage-induced mutagenesis and translesion synthesis (TLS). It is not the major replicative DNA polymerase. The protein is Error-prone DNA polymerase of Vibrio parahaemolyticus serotype O3:K6 (strain RIMD 2210633).